The chain runs to 143 residues: Mannitol-specific phosphotransferase enzyme IIA component (143 aa).

A PTS EIIA type-2 domain is found at 1-142 (MKLLKNNIYI…DKVLEFLAKH (142 aa)). Histidine 61 functions as the Tele-phosphohistidine intermediate in the catalytic mechanism. Histidine 61 is subject to Phosphohistidine; by HPr.

It is found in the cytoplasm. The phosphoenolpyruvate-dependent sugar phosphotransferase system (sugar PTS), a major carbohydrate active transport system, catalyzes the phosphorylation of incoming sugar substrates concomitantly with their translocation across the cell membrane. The enzyme II CmtAB PTS system is involved in D-mannitol transport. This chain is Mannitol-specific phosphotransferase enzyme IIA component (mtlF), found in Mycoplasma pneumoniae (strain ATCC 29342 / M129 / Subtype 1) (Mycoplasmoides pneumoniae).